The sequence spans 79 residues: MPRRVLQGQVISAKSDKTIIVSVERRFKHPMYHKTVKIAKKYAVHDPDNLYNQGDKVKIIESRPISKTKCWRVIEDKGQ.

This sequence belongs to the universal ribosomal protein uS17 family. Part of the 30S ribosomal subunit.

Functionally, one of the primary rRNA binding proteins, it binds specifically to the 5'-end of 16S ribosomal RNA. This chain is Small ribosomal subunit protein uS17, found in Orientia tsutsugamushi (strain Boryong) (Rickettsia tsutsugamushi).